The primary structure comprises 1544 residues: Lysophospholipase NTE1 (1544 aa).

Residues Met1–Ser37 are Cytoplasmic-facing. A helical transmembrane segment spans residues Leu38–Leu58. Topologically, residues Tyr59–Thr76 are lumenal. The chain crosses the membrane as a helical span at residues Leu77–Val97. Residues Arg98–Ile1544 are Cytoplasmic-facing. Disordered stretches follow at residues Arg265–Pro312 and Glu424–Glu552. A compositionally biased stretch (polar residues) spans Asn275–Asn310. Residues Ser425–Ser447 are compositionally biased toward low complexity. Composition is skewed to polar residues over residues Leu448 to Arg458 and Gln517 to Phe536. The span at Glu537–Asp546 shows a compositional bias: basic and acidic residues. Residues Ser681–Leu811 and Lys807–Lys960 contribute to the a nucleoside 3',5'-cyclic phosphate site. One can recognise a PNPLA domain in the interval Leu1237–Lys1401. The GXGXXG motif lies at Gly1241–Gly1246. Positions Gly1268–Gly1272 match the GXSXG motif. The active-site Nucleophile is the Ser1270. Catalysis depends on Asp1388, which acts as the Proton acceptor. Positions Asp1388–Gly1390 match the DGA/G motif.

This sequence belongs to the NTE family.

The protein resides in the endoplasmic reticulum membrane. It carries out the reaction a 1-acyl-sn-glycero-3-phosphocholine + H2O = sn-glycerol 3-phosphocholine + a fatty acid + H(+). Its activity is regulated as follows. Inhibited by organophosphorus esters. Functionally, intracellular phospholipase B that catalyzes the double deacylation of phosphatidylcholine (PC) to glycerophosphocholine (GroPCho). Plays an important role in membrane lipid homeostasis. Responsible for the rapid PC turnover in response to inositol, elevated temperatures, or when choline is present in the growth medium. The protein is Lysophospholipase NTE1 (NTE1) of Debaryomyces hansenii (strain ATCC 36239 / CBS 767 / BCRC 21394 / JCM 1990 / NBRC 0083 / IGC 2968) (Yeast).